A 385-amino-acid chain; its full sequence is Serpin-Z1 (385 aa).

The interval 317–341 (GAEAAAATADGDCGCSLDFVEPPKK) is RCL.

This sequence belongs to the serpin family.

In terms of biological role, probable serine protease inhibitor. The chain is Serpin-Z1 from Arabidopsis thaliana (Mouse-ear cress).